A 499-amino-acid polypeptide reads, in one-letter code: Phenylalanine--tRNA ligase alpha subunit (499 aa).

L-phenylalanine contacts are provided by residues threonine 342, 381–383 (QID), and phenylalanine 422. Glutamate 424 is a binding site for Mg(2+). Residue phenylalanine 447 participates in L-phenylalanine binding.

This sequence belongs to the class-II aminoacyl-tRNA synthetase family. Phe-tRNA synthetase alpha subunit type 2 subfamily. Tetramer of two alpha and two beta subunits. The cofactor is Mg(2+).

Its subcellular location is the cytoplasm. It catalyses the reaction tRNA(Phe) + L-phenylalanine + ATP = L-phenylalanyl-tRNA(Phe) + AMP + diphosphate + H(+). This Pyrococcus horikoshii (strain ATCC 700860 / DSM 12428 / JCM 9974 / NBRC 100139 / OT-3) protein is Phenylalanine--tRNA ligase alpha subunit.